Here is a 445-residue protein sequence, read N- to C-terminus: Xylose isomerase (445 aa).

Active-site residues include H107 and D110. Mg(2+) is bound by residues E238, E274, H277, D302, D313, D315, and D345.

The protein belongs to the xylose isomerase family. As to quaternary structure, homotetramer. The cofactor is Mg(2+).

The protein resides in the cytoplasm. The enzyme catalyses alpha-D-xylose = alpha-D-xylulofuranose. The polypeptide is Xylose isomerase (Bacillus pumilus (strain SAFR-032)).